Consider the following 632-residue polypeptide: 1-deoxy-D-xylulose-5-phosphate synthase (632 aa).

Thiamine diphosphate contacts are provided by residues histidine 87 and 128 to 130 (GHS). Residue aspartate 159 coordinates Mg(2+). Residues 160 to 161 (GA), asparagine 188, phenylalanine 295, and glutamate 377 each bind thiamine diphosphate. Asparagine 188 serves as a coordination point for Mg(2+).

It belongs to the transketolase family. DXPS subfamily. Homodimer. Requires Mg(2+) as cofactor. It depends on thiamine diphosphate as a cofactor.

It catalyses the reaction D-glyceraldehyde 3-phosphate + pyruvate + H(+) = 1-deoxy-D-xylulose 5-phosphate + CO2. Its pathway is metabolic intermediate biosynthesis; 1-deoxy-D-xylulose 5-phosphate biosynthesis; 1-deoxy-D-xylulose 5-phosphate from D-glyceraldehyde 3-phosphate and pyruvate: step 1/1. Catalyzes the acyloin condensation reaction between C atoms 2 and 3 of pyruvate and glyceraldehyde 3-phosphate to yield 1-deoxy-D-xylulose-5-phosphate (DXP). The polypeptide is 1-deoxy-D-xylulose-5-phosphate synthase (Stutzerimonas stutzeri (strain A1501) (Pseudomonas stutzeri)).